The sequence spans 709 residues: Polyribonucleotide nucleotidyltransferase (709 aa).

D489 and D495 together coordinate Mg(2+). A KH domain is found at 556 to 615 (PKIDMIKIDVDKIKVVIGKGGETIDKIIAETGVKIDIDEEGNVSIFSSDQAAIDRTKDII). The region spanning 625–693 (GEVYHAKVVR…DKGRVDASMK (69 aa)) is the S1 motif domain.

Belongs to the polyribonucleotide nucleotidyltransferase family. The cofactor is Mg(2+).

It localises to the cytoplasm. The catalysed reaction is RNA(n+1) + phosphate = RNA(n) + a ribonucleoside 5'-diphosphate. In terms of biological role, involved in mRNA degradation. Catalyzes the phosphorolysis of single-stranded polyribonucleotides processively in the 3'- to 5'-direction. The polypeptide is Polyribonucleotide nucleotidyltransferase (Streptococcus agalactiae serotype V (strain ATCC BAA-611 / 2603 V/R)).